A 144-amino-acid chain; its full sequence is Heme transporter hrg1-B (144 aa).

4 consecutive transmembrane segments (helical) span residues 6-26 (IYIS…AFIV), 38-58 (AMGG…IMYI), 71-91 (FFMF…ATFI), and 107-127 (FYLS…LGLY). Residues 140-141 (IL) carry the Di-leucine motif motif.

This sequence belongs to the HRG family.

It localises to the endosome membrane. The protein resides in the lysosome membrane. Its subcellular location is the cytoplasmic vesicle. The protein localises to the phagosome membrane. The catalysed reaction is heme b(in) = heme b(out). In terms of biological role, heme transporter that regulates intracellular heme availability through the endosomal or lysosomal compartment. In macrophages, is the heme transporter for heme-iron recycling. Essential for macrophage iron homeostasis, transports heme from the phagolysosome to the cytoplasm during erythrophagocytosis (EP). This Danio rerio (Zebrafish) protein is Heme transporter hrg1-B (slc48a1a).